We begin with the raw amino-acid sequence, 205 residues long: dITP/XTP pyrophosphatase (205 aa).

Residue 11–16 participates in substrate binding; sequence TKNMGK. Residues Glu-44 and Asp-73 each coordinate Mg(2+). Asp-73 functions as the Proton acceptor in the catalytic mechanism. Substrate is bound by residues Ser-74, 158–161, Lys-181, and 186–187; these read FGYD and HR.

This sequence belongs to the HAM1 NTPase family. As to quaternary structure, homodimer. Requires Mg(2+) as cofactor.

It catalyses the reaction XTP + H2O = XMP + diphosphate + H(+). The enzyme catalyses dITP + H2O = dIMP + diphosphate + H(+). It carries out the reaction ITP + H2O = IMP + diphosphate + H(+). In terms of biological role, pyrophosphatase that catalyzes the hydrolysis of nucleoside triphosphates to their monophosphate derivatives, with a high preference for the non-canonical purine nucleotides XTP (xanthosine triphosphate), dITP (deoxyinosine triphosphate) and ITP. Seems to function as a house-cleaning enzyme that removes non-canonical purine nucleotides from the nucleotide pool, thus preventing their incorporation into DNA/RNA and avoiding chromosomal lesions. The protein is dITP/XTP pyrophosphatase of Bacillus thuringiensis subsp. konkukian (strain 97-27).